The primary structure comprises 413 residues: Serine hydroxymethyltransferase (413 aa).

(6S)-5,6,7,8-tetrahydrofolate is bound by residues L119 and 123 to 125; that span reads GHL. Position 228 is an N6-(pyridoxal phosphate)lysine (K228). 351–353 provides a ligand contact to (6S)-5,6,7,8-tetrahydrofolate; that stretch reads SPF.

The protein belongs to the SHMT family. As to quaternary structure, homodimer. It depends on pyridoxal 5'-phosphate as a cofactor.

The protein localises to the cytoplasm. The catalysed reaction is (6R)-5,10-methylene-5,6,7,8-tetrahydrofolate + glycine + H2O = (6S)-5,6,7,8-tetrahydrofolate + L-serine. It participates in one-carbon metabolism; tetrahydrofolate interconversion. Its pathway is amino-acid biosynthesis; glycine biosynthesis; glycine from L-serine: step 1/1. In terms of biological role, catalyzes the reversible interconversion of serine and glycine with tetrahydrofolate (THF) serving as the one-carbon carrier. This reaction serves as the major source of one-carbon groups required for the biosynthesis of purines, thymidylate, methionine, and other important biomolecules. Also exhibits THF-independent aldolase activity toward beta-hydroxyamino acids, producing glycine and aldehydes, via a retro-aldol mechanism. This chain is Serine hydroxymethyltransferase, found in Clostridium botulinum (strain 657 / Type Ba4).